The chain runs to 602 residues: Elongation factor 4 (602 aa).

A tr-type G domain is found at 6-188 (RNVRNFSIIA…RITEVVPEPA (183 aa)). Residues 18 to 23 (DHGKST) and 135 to 138 (NKID) each bind GTP.

This sequence belongs to the TRAFAC class translation factor GTPase superfamily. Classic translation factor GTPase family. LepA subfamily.

Its subcellular location is the cell membrane. It catalyses the reaction GTP + H2O = GDP + phosphate + H(+). Its function is as follows. Required for accurate and efficient protein synthesis under certain stress conditions. May act as a fidelity factor of the translation reaction, by catalyzing a one-codon backward translocation of tRNAs on improperly translocated ribosomes. Back-translocation proceeds from a post-translocation (POST) complex to a pre-translocation (PRE) complex, thus giving elongation factor G a second chance to translocate the tRNAs correctly. Binds to ribosomes in a GTP-dependent manner. The chain is Elongation factor 4 from Oceanobacillus iheyensis (strain DSM 14371 / CIP 107618 / JCM 11309 / KCTC 3954 / HTE831).